Consider the following 227-residue polypeptide: Small ribosomal subunit protein uS3 (227 aa).

The KH type-2 domain maps to 39-108; sequence IRKFVEERYK…DVTVNVDEVK (70 aa).

Belongs to the universal ribosomal protein uS3 family. As to quaternary structure, part of the 30S ribosomal subunit. Forms a tight complex with proteins S10 and S14.

Functionally, binds the lower part of the 30S subunit head. Binds mRNA in the 70S ribosome, positioning it for translation. The polypeptide is Small ribosomal subunit protein uS3 (Persephonella marina (strain DSM 14350 / EX-H1)).